A 96-amino-acid polypeptide reads, in one-letter code: Co-chaperonin GroES (96 aa).

It belongs to the GroES chaperonin family. As to quaternary structure, heptamer of 7 subunits arranged in a ring. Interacts with the chaperonin GroEL.

It localises to the cytoplasm. In terms of biological role, together with the chaperonin GroEL, plays an essential role in assisting protein folding. The GroEL-GroES system forms a nano-cage that allows encapsulation of the non-native substrate proteins and provides a physical environment optimized to promote and accelerate protein folding. GroES binds to the apical surface of the GroEL ring, thereby capping the opening of the GroEL channel. The chain is Co-chaperonin GroES from Haemophilus influenzae (strain PittGG).